A 142-amino-acid chain; its full sequence is uncharacterized protein (142 aa).

It is found in the mitochondrion. This is an uncharacterized protein from Mus musculus (Mouse).